The chain runs to 513 residues: 2,3-bisphosphoglycerate-independent phosphoglycerate mutase (513 aa).

The Mn(2+) site is built by D14 and S64. Residue S64 is the Phosphoserine intermediate of the active site. Residues H125, 155–156 (RD), R187, R193, 259–262 (RADR), and K333 each bind substrate. D400, H404, D441, H442, and H460 together coordinate Mn(2+).

Belongs to the BPG-independent phosphoglycerate mutase family. In terms of assembly, monomer. The cofactor is Mn(2+).

It carries out the reaction (2R)-2-phosphoglycerate = (2R)-3-phosphoglycerate. The protein operates within carbohydrate degradation; glycolysis; pyruvate from D-glyceraldehyde 3-phosphate: step 3/5. In terms of biological role, catalyzes the interconversion of 2-phosphoglycerate and 3-phosphoglycerate. The polypeptide is 2,3-bisphosphoglycerate-independent phosphoglycerate mutase (Pseudomonas fluorescens (strain ATCC BAA-477 / NRRL B-23932 / Pf-5)).